Reading from the N-terminus, the 381-residue chain is Putative heat shock protein HSP 90-beta 2 (381 aa).

3 residues coordinate ATP: Asn46, Asp88, and Lys107. Residues 145-174 are compositionally biased toward basic and acidic residues; sequence KEISDGKAEEEKGEKEEENKDDEEKPKIED. The tract at residues 145-192 is disordered; that stretch reads KEISDGKAEEEKGEKEEENKDDEEKPKIEDVGSDEEDDSGKDKKKKTK. A Phosphoserine modification is found at Ser177. Residues 315-347 adopt a coiled-coil conformation; the sequence is ELPEDGEEKKRMEERKAKFENLCKFMKETLDKK.

Belongs to the heat shock protein 90 family. In terms of assembly, homodimer.

The protein resides in the cytoplasm. Functionally, putative molecular chaperone that may promote the maturation, structural maintenance and proper regulation of specific target proteins. The polypeptide is Putative heat shock protein HSP 90-beta 2 (HSP90AB2P) (Homo sapiens (Human)).